Here is a 182-residue protein sequence, read N- to C-terminus: Ribosome-recycling factor (182 aa).

Belongs to the RRF family.

The protein resides in the cytoplasm. In terms of biological role, responsible for the release of ribosomes from messenger RNA at the termination of protein biosynthesis. May increase the efficiency of translation by recycling ribosomes from one round of translation to another. This chain is Ribosome-recycling factor, found in Prochlorococcus marinus (strain MIT 9313).